The primary structure comprises 402 residues: N-acetyllactosaminide beta-1,6-N-acetylglucosaminyl-transferase (402 aa).

Over 1–7 the chain is Cytoplasmic; that stretch reads MMGSWKH. The helical; Signal-anchor for type II membrane protein transmembrane segment at 8–23 threads the bilayer; sequence CLFSASLISALIFVFV. At 24–400 the chain is on the lumenal side; it reads YNTELWENKR…QSETAIQPSW (377 aa). Asn-41 carries an N-linked (GlcNAc...) asparagine glycan.

This sequence belongs to the glycosyltransferase 14 family. In terms of tissue distribution, expressed in lens epithelium cells. Expressed in reticulocytes.

Its subcellular location is the golgi apparatus membrane. It catalyses the reaction a beta-D-Gal-(1-&gt;4)-beta-D-GlcNAc-(1-&gt;3)-beta-D-Gal-(1-&gt;4)-beta-D-GlcNAc derivative + UDP-N-acetyl-alpha-D-glucosamine = a beta-D-Gal-(1-&gt;4)-beta-D-GlcNAc-(1-&gt;3)-[beta-D-GlcNAc-(1-&gt;6)]-beta-D-Gal-(1-&gt;4)-N-acetyl-beta-D-glucosaminyl derivative + UDP + H(+). The protein operates within protein modification; protein glycosylation. Its function is as follows. Branching enzyme that converts linear into branched poly-N-acetyllactosaminoglycans. Introduces the blood group I antigen during embryonic development. It is closely associated with the development and maturation of erythroid cells. In terms of biological role, determines the expression of the blood group I antigen in erythrocytes. This Homo sapiens (Human) protein is N-acetyllactosaminide beta-1,6-N-acetylglucosaminyl-transferase (GCNT2).